A 159-amino-acid polypeptide reads, in one-letter code: Ribosomal RNA large subunit methyltransferase H (159 aa).

Residues Leu-76, Gly-108, and 127 to 132 each bind S-adenosyl-L-methionine; that span reads FGRLTL.

The protein belongs to the RNA methyltransferase RlmH family. Homodimer.

The protein localises to the cytoplasm. It carries out the reaction pseudouridine(1915) in 23S rRNA + S-adenosyl-L-methionine = N(3)-methylpseudouridine(1915) in 23S rRNA + S-adenosyl-L-homocysteine + H(+). In terms of biological role, specifically methylates the pseudouridine at position 1915 (m3Psi1915) in 23S rRNA. The protein is Ribosomal RNA large subunit methyltransferase H of Listeria monocytogenes serovar 1/2a (strain ATCC BAA-679 / EGD-e).